We begin with the raw amino-acid sequence, 114 residues long: Lymphotactin (114 aa).

The N-terminal stretch at 1 to 21 (MRLLLLTFLGVCCFAAWVVEG) is a signal peptide. Cysteines 32 and 69 form a disulfide. The tract at residues 87-114 (RASASKSKAETIPTQAQRSASTAVTLTG) is disordered. Residues 98–114 (IPTQAQRSASTAVTLTG) show a composition bias toward polar residues.

It belongs to the intercrine gamma family.

The protein localises to the secreted. Functionally, chemotactic activity for lymphocytes but not for monocytes or neutrophils. In thymus, mediates medullary accumulation of thymic dendritic cells and contributes to regulatoy T cell development, playing a role in self-tolerance establishment. This Rattus norvegicus (Rat) protein is Lymphotactin (Xcl1).